The chain runs to 546 residues: Chaperonin GroEL 2 (546 aa).

ATP contacts are provided by residues 30–33 (TLGP), lysine 51, 87–91 (DGTTT), glycine 415, 479–481 (NAA), and aspartate 495. Positions 524-546 (APKDAPPAQPAGVPGAGGTGFDF) are disordered. A compositionally biased stretch (gly residues) spans 537 to 546 (PGAGGTGFDF).

This sequence belongs to the chaperonin (HSP60) family. In terms of assembly, forms a cylinder of 14 subunits composed of two heptameric rings stacked back-to-back. Interacts with the co-chaperonin GroES.

It is found in the cytoplasm. The enzyme catalyses ATP + H2O + a folded polypeptide = ADP + phosphate + an unfolded polypeptide.. Functionally, together with its co-chaperonin GroES, plays an essential role in assisting protein folding. The GroEL-GroES system forms a nano-cage that allows encapsulation of the non-native substrate proteins and provides a physical environment optimized to promote and accelerate protein folding. The polypeptide is Chaperonin GroEL 2 (Burkholderia thailandensis (strain ATCC 700388 / DSM 13276 / CCUG 48851 / CIP 106301 / E264)).